The chain runs to 675 residues: UvrABC system protein B (675 aa).

A Helicase ATP-binding domain is found at 32–417 (EGLSDGLAYQ…EHAGQVVEQV (386 aa)). 45–52 (GVTGSGKT) is a binding site for ATP. Residues 98–121 (YYDYYQPEAYVPSRDLFIEKDSAI) carry the Beta-hairpin motif. The region spanning 436 to 602 (QVDDLMSEIN…QIKKQVKDII (167 aa)) is the Helicase C-terminal domain. Residues 634-669 (IKEIAKLEKAMQQAARDLQFEEAAVLRDRIRNIKEN) enclose the UVR domain.

It belongs to the UvrB family. In terms of assembly, forms a heterotetramer with UvrA during the search for lesions. Interacts with UvrC in an incision complex.

The protein resides in the cytoplasm. Its function is as follows. The UvrABC repair system catalyzes the recognition and processing of DNA lesions. A damage recognition complex composed of 2 UvrA and 2 UvrB subunits scans DNA for abnormalities. Upon binding of the UvrA(2)B(2) complex to a putative damaged site, the DNA wraps around one UvrB monomer. DNA wrap is dependent on ATP binding by UvrB and probably causes local melting of the DNA helix, facilitating insertion of UvrB beta-hairpin between the DNA strands. Then UvrB probes one DNA strand for the presence of a lesion. If a lesion is found the UvrA subunits dissociate and the UvrB-DNA preincision complex is formed. This complex is subsequently bound by UvrC and the second UvrB is released. If no lesion is found, the DNA wraps around the other UvrB subunit that will check the other stand for damage. The polypeptide is UvrABC system protein B (Neisseria meningitidis serogroup A / serotype 4A (strain DSM 15465 / Z2491)).